The sequence spans 617 residues: Protein fem-1 homolog C (617 aa).

Position 1 is an N-acetylmethionine (Met-1). ANK repeat units follow at residues 2 to 31, 40 to 70, 82 to 111, 115 to 144, 148 to 177, 181 to 210, and 213 to 242; these read DLKT…KAEV, NGAT…SIEV, EGAP…SVNN, TNST…DLEV, HGHT…DVNR, KGNT…KMEK, and YGMT…TSKT. 2 TPR repeats span residues 245-279 and 338-371; these read INAL…RYSD and SYYI…QQSN. ANK repeat units follow at residues 481–523 and 527–556; these read NNFS…DVNV and DDNS…HFDA.

It belongs to the fem-1 family. In terms of assembly, component of a Cul2-RING (CRL2) E3 ubiquitin-protein ligase complex, also named ECS (Elongin BC-CUL2/5-SOCS-box protein) complex, composed of CUL2, Elongin BC (ELOB and ELOC), RBX1 and substrate-specific adapter FEM1C. Widely expressed. Expressed at higher level in testis.

The protein operates within protein modification; protein ubiquitination. In terms of biological role, substrate-recognition component of a Cul2-RING (CRL2) E3 ubiquitin-protein ligase complex of the DesCEND (destruction via C-end degrons) pathway, which recognizes a C-degron located at the extreme C terminus of target proteins, leading to their ubiquitination and degradation. The C-degron recognized by the DesCEND pathway is usually a motif of less than ten residues and can be present in full-length proteins, truncated proteins or proteolytically cleaved forms. The CRL2(FEM1C) complex specifically recognizes proteins with an arginine at the C-terminus: recognizes and binds proteins ending with -Lys/Arg-Xaa-Arg and -Lys/Arg-Xaa-Xaa-Arg C-degrons, such as SIL1 or OR51B2, leading to their ubiquitination and degradation. The CRL2(FEM1C) complex mediates ubiquitination and degradation of truncated MSRB1/SEPX1 selenoproteins produced by failed UGA/Sec decoding. Promotes ubiquitination and degradation of SLBP. The chain is Protein fem-1 homolog C from Mus musculus (Mouse).